We begin with the raw amino-acid sequence, 911 residues long: SH3 and PX domain-containing protein 2B (911 aa).

A PX domain is found at arginine 5–leucine 129. Tyrosine 25 carries the phosphotyrosine modification. 2 SH3 domains span residues methionine 152–glycine 211 and glutamate 221–glycine 280. The tract at residues leucine 275 to proline 366 is disordered. Residues serine 279 and serine 291 each carry the phosphoserine modification. The segment covering proline 282 to proline 292 has biased composition (pro residues). The span at glycine 311–glutamine 337 shows a compositional bias: basic and acidic residues. The segment covering arginine 338–proline 347 has biased composition (basic residues). In terms of domain architecture, SH3 3 spans glutamine 368 to lysine 427. Residues asparagine 458–glutamate 834 are disordered. Basic and acidic residues-rich tracts occupy residues lysine 486 to serine 499, glutamate 517 to glutamine 548, proline 571 to arginine 586, cysteine 598 to lysine 609, and serine 618 to aspartate 628. A phosphoserine mark is found at serine 499 and serine 528. Pro residues-rich tracts occupy residues arginine 643–glutamate 653 and valine 756–lysine 766. Over residues glycine 822 to lysine 831 the composition is skewed to gly residues. At serine 843 the chain carries Phosphoserine. In terms of domain architecture, SH3 4 spans leucine 850–proline 911.

This sequence belongs to the SH3PXD2 family. In terms of assembly, interacts with ADAM15. Interacts with NOXO1. Interacts (via SH3 domains) with NOXA1; the interaction is direct. Interacts with FASLG. Phosphorylated in SRC-transformed cells. In terms of tissue distribution, expressed in fibroblasts.

Its subcellular location is the cytoplasm. It localises to the cell projection. The protein resides in the podosome. In terms of biological role, adapter protein involved in invadopodia and podosome formation and extracellular matrix degradation. Binds matrix metalloproteinases (ADAMs), NADPH oxidases (NOXs) and phosphoinositides. Acts as an organizer protein that allows NOX1- or NOX3-dependent reactive oxygen species (ROS) generation and ROS localization. Plays a role in mitotic clonal expansion during the immediate early stage of adipocyte differentiation. The sequence is that of SH3 and PX domain-containing protein 2B (SH3PXD2B) from Homo sapiens (Human).